The following is a 920-amino-acid chain: Dynamin-2B (920 aa).

At methionine 1 the chain carries N-acetylmethionine. The Dynamin-type G domain maps to 35–303 (PATSLNVVAL…IRSRMKLRLP (269 aa)). Residues 45-52 (GNVGAGKS) form a G1 motif region. GTP is bound at residue 45–53 (GNVGAGKSA). The interval 71 to 73 (ATR) is G2 motif. Residues 143–146 (DLPG) form a G3 motif region. Residues 204-207 (SKID) are G4 motif. Position 204 to 210 (204 to 210 (SKIDQAA)) interacts with GTP. The G5 motif stretch occupies residues 238–241 (ALIG). Residue 246 to 249 (IASA) coordinates GTP. Residues 507–522 (RREEELKGRSSKKGQD) show a composition bias toward basic and acidic residues. Disordered stretches follow at residues 507–577 (RREE…TAGP) and 632–657 (IEEI…PDSK). The segment covering 523–545 (AEQSLLNRATSPQPDGPSSTGGS) has biased composition (polar residues). Composition is skewed to basic and acidic residues over residues 548–567 (SLRD…KETP) and 641–652 (EKSKSSKDKKSN). In terms of domain architecture, PH spans 579 to 703 (GEITAGYLMK…WINKLQKVIQ (125 aa)). Positions 737–830 (LRWMSQEVRG…QLSIHDNRAA (94 aa)) constitute a GED domain. The segment at 747 to 761 (YVEAVLNSLAANVPK) is important for homodimerization. Residues 788 to 812 (NERIESLIQEDQNVKRRRDRYQKQS) are a coiled coil. Residues 828–920 (RAAAASSWSD…PPQSGSSYRY (93 aa)) form a disordered region. Over residues 833–849 (SSWSDNSGTESSPRTNG) the composition is skewed to polar residues.

It belongs to the TRAFAC class dynamin-like GTPase superfamily. Dynamin/Fzo/YdjA family. Interacts with DRP1A at the plasma membrane and in forming clathrin-coated vesicles (CCV). As to expression, ubiquitous. Preferentially expressed in siliques.

Its subcellular location is the cytoplasm. The protein localises to the cytoskeleton. It is found in the cytoplasmic vesicle. The protein resides in the clathrin-coated vesicle. It localises to the cell membrane. The enzyme catalyses GTP + H2O = GDP + phosphate + H(+). Putative microtubule-associated force-producing protein, able to bind and hydrolyze GTP. Collaboratively with DRP1A, participates in clathrin-coated vesicle formation during endocytosis. With DRP1A and PIP5K3, required for the precise coordination of polar ARAC3/ROP6 and ARAC4/ROP2 placement and subsequent root hair positioning during planar polarity formation in root hair-forming cells. The polypeptide is Dynamin-2B (Arabidopsis thaliana (Mouse-ear cress)).